We begin with the raw amino-acid sequence, 294 residues long: Acetyl-coenzyme A carboxylase carboxyl transferase subunit beta (294 aa).

The 268-residue stretch at 27–294 folds into the CoA carboxyltransferase N-terminal domain; the sequence is LWHKCPSCDA…PSPVALPVTA (268 aa). The Zn(2+) site is built by Cys31, Cys34, Cys50, and Cys53. The C4-type zinc-finger motif lies at 31 to 53; the sequence is CPSCDAVLYRPELEKTLDVCPKC.

Belongs to the AccD/PCCB family. In terms of assembly, acetyl-CoA carboxylase is a heterohexamer composed of biotin carboxyl carrier protein (AccB), biotin carboxylase (AccC) and two subunits each of ACCase subunit alpha (AccA) and ACCase subunit beta (AccD). It depends on Zn(2+) as a cofactor.

The protein resides in the cytoplasm. It catalyses the reaction N(6)-carboxybiotinyl-L-lysyl-[protein] + acetyl-CoA = N(6)-biotinyl-L-lysyl-[protein] + malonyl-CoA. The protein operates within lipid metabolism; malonyl-CoA biosynthesis; malonyl-CoA from acetyl-CoA: step 1/1. Its function is as follows. Component of the acetyl coenzyme A carboxylase (ACC) complex. Biotin carboxylase (BC) catalyzes the carboxylation of biotin on its carrier protein (BCCP) and then the CO(2) group is transferred by the transcarboxylase to acetyl-CoA to form malonyl-CoA. In Ectopseudomonas mendocina (strain ymp) (Pseudomonas mendocina), this protein is Acetyl-coenzyme A carboxylase carboxyl transferase subunit beta.